Consider the following 642-residue polypeptide: Threonine--tRNA ligase (642 aa).

The 61-residue stretch at 1–61 folds into the TGS domain; it reads MPIITLPDGS…EHDASLEIIT (61 aa). Positions 244–535 are catalytic; the sequence is DHRKIGKQLD…LIEEYAGFFP (292 aa). 3 residues coordinate Zn(2+): Cys-335, His-386, and His-512.

This sequence belongs to the class-II aminoacyl-tRNA synthetase family. In terms of assembly, homodimer. It depends on Zn(2+) as a cofactor.

The protein resides in the cytoplasm. The catalysed reaction is tRNA(Thr) + L-threonine + ATP = L-threonyl-tRNA(Thr) + AMP + diphosphate + H(+). Catalyzes the attachment of threonine to tRNA(Thr) in a two-step reaction: L-threonine is first activated by ATP to form Thr-AMP and then transferred to the acceptor end of tRNA(Thr). Also edits incorrectly charged L-seryl-tRNA(Thr). This Vibrio cholerae serotype O1 (strain ATCC 39541 / Classical Ogawa 395 / O395) protein is Threonine--tRNA ligase.